Consider the following 857-residue polypeptide: Facilitated trehalose transporter Tret1-1 (857 aa).

Disordered regions lie at residues M1–E28 and D62–S203. Residues M1 to Y392 lie on the Cytoplasmic side of the membrane. Residues V69–T81 show a composition bias toward polar residues. A compositionally biased stretch (basic and acidic residues) spans E134–Q143. A compositionally biased stretch (polar residues) spans G171 to A181. 5 positions are modified to phosphoserine: S248, S249, S250, S320, and S322. Positions L327–S346 are disordered. Positions R330–T341 are enriched in polar residues. A helical membrane pass occupies residues I393–V413. Over S414–S440 the chain is Extracellular. N428 carries N-linked (GlcNAc...) asparagine glycosylation. The helical transmembrane segment at W441–I461 threads the bilayer. Topologically, residues E462–T473 are cytoplasmic. A helical transmembrane segment spans residues A474 to L494. The Extracellular portion of the chain corresponds to C495–R497. A helical membrane pass occupies residues F498–T518. Residues V519–G528 lie on the Cytoplasmic side of the membrane. Residues L529–M549 form a helical membrane-spanning segment. N-linked (GlcNAc...) asparagine glycosylation is present at N550. The Extracellular portion of the chain corresponds to N550–S552. Residues M553–P573 traverse the membrane as a helical segment. Topologically, residues E574–P636 are cytoplasmic. A helical transmembrane segment spans residues L637 to F657. Residues Y658 to N673 lie on the Extracellular side of the membrane. Residues L674–I694 form a helical membrane-spanning segment. Residues D695 to K700 lie on the Cytoplasmic side of the membrane. A helical membrane pass occupies residues I701–F721. Over Y722–C740 the chain is Extracellular. Residues F741–G761 form a helical membrane-spanning segment. At E762–G770 the chain is on the cytoplasmic side. A helical transmembrane segment spans residues P771–F791. Residues Q792–H801 are Extracellular-facing. The chain crosses the membrane as a helical span at residues G802 to V822. Residues P823–M857 lie on the Cytoplasmic side of the membrane. Phosphoserine is present on residues S845 and S846.

This sequence belongs to the major facilitator superfamily. Sugar transporter (TC 2.A.1.1) family. Trehalose transporter subfamily.

The protein localises to the cell membrane. Low-capacity facilitative transporter for trehalose. Does not transport maltose, sucrose or lactose. Mediates the bidirectional transfer of trehalose. Responsible for the transport of trehalose synthesized in the fat body and the incorporation of trehalose into other tissues that require a carbon source, thereby regulating trehalose levels in the hemolymph. In Drosophila simulans (Fruit fly), this protein is Facilitated trehalose transporter Tret1-1.